Reading from the N-terminus, the 323-residue chain is Cytochrome c biogenesis protein CcsA (323 aa).

8 helical membrane passes run 18 to 38, 43 to 63, 71 to 91, 99 to 119, 146 to 166, 227 to 247, 256 to 276, and 288 to 308; these read VSVV…VGLY, KGML…WVYW, LYES…IPSF, LNVI…SGLL, LGYA…IIIF, VISL…VWAN, WDPK…YLHI, and AIVA…VNLL.

It belongs to the CcmF/CycK/Ccl1/NrfE/CcsA family. May interact with Ccs1.

It is found in the plastid. Its subcellular location is the chloroplast thylakoid membrane. Functionally, required during biogenesis of c-type cytochromes (cytochrome c6 and cytochrome f) at the step of heme attachment. This Spinacia oleracea (Spinach) protein is Cytochrome c biogenesis protein CcsA.